Consider the following 397-residue polypeptide: 8-amino-7-oxononanoate synthase (397 aa).

R23 is a substrate binding site. 110–111 (GY) serves as a coordination point for pyridoxal 5'-phosphate. H135 serves as a coordination point for substrate. Positions 181, 209, and 237 each coordinate pyridoxal 5'-phosphate. K240 is modified (N6-(pyridoxal phosphate)lysine). T354 contributes to the substrate binding site.

It belongs to the class-II pyridoxal-phosphate-dependent aminotransferase family. BioF subfamily. Homodimer. It depends on pyridoxal 5'-phosphate as a cofactor.

The enzyme catalyses 6-carboxyhexanoyl-[ACP] + L-alanine + H(+) = (8S)-8-amino-7-oxononanoate + holo-[ACP] + CO2. The protein operates within cofactor biosynthesis; biotin biosynthesis. In terms of biological role, catalyzes the decarboxylative condensation of pimeloyl-[acyl-carrier protein] and L-alanine to produce 8-amino-7-oxononanoate (AON), [acyl-carrier protein], and carbon dioxide. The polypeptide is 8-amino-7-oxononanoate synthase (Anaeromyxobacter sp. (strain Fw109-5)).